We begin with the raw amino-acid sequence, 315 residues long: Large ribosomal subunit protein uL29m (315 aa).

This sequence belongs to the universal ribosomal protein uL29 family. Component of the mitochondrial large ribosomal subunit. Mature mitochondrial ribosomes consist of a small (37S) and a large (54S) subunit. The 37S subunit contains at least 33 different proteins and 1 molecule of RNA (15S). The 54S subunit contains at least 45 different proteins and 1 molecule of RNA (21S).

It localises to the mitochondrion. The polypeptide is Large ribosomal subunit protein uL29m (MRPL4) (Candida glabrata (strain ATCC 2001 / BCRC 20586 / JCM 3761 / NBRC 0622 / NRRL Y-65 / CBS 138) (Yeast)).